We begin with the raw amino-acid sequence, 339 residues long: RNA polymerase principal sigma factor HrdC (339 aa).

Positions 1 to 10 (MAPTARTPTA) are enriched in low complexity. Disordered regions lie at residues 1–37 (MAPT…EEPD) and 71–101 (REEL…DGQE). The segment covering 91 to 101 (TLEETVHDGQE) has biased composition (basic and acidic residues). The short motif at 130-143 (DVIQEGNLGLIRAV) is the Polymerase core binding element. A DNA-binding region (H-T-H motif) is located at residues 300–319 (LQQVAQHVGLTRERVRQLEK).

It belongs to the sigma-70 factor family. In terms of assembly, interacts transiently with the RNA polymerase catalytic core.

Sigma factors are initiation factors that promote the attachment of RNA polymerase to specific initiation sites and are then released. This is RNA polymerase principal sigma factor HrdC (hrdC) from Streptomyces coelicolor (strain ATCC BAA-471 / A3(2) / M145).